The following is an 841-amino-acid chain: DNA mismatch repair protein MutS (841 aa).

Position 600–607 (600–607 (GPNMAGKS)) interacts with ATP.

This sequence belongs to the DNA mismatch repair MutS family.

This protein is involved in the repair of mismatches in DNA. It is possible that it carries out the mismatch recognition step. This protein has a weak ATPase activity. The chain is DNA mismatch repair protein MutS from Carboxydothermus hydrogenoformans (strain ATCC BAA-161 / DSM 6008 / Z-2901).